The sequence spans 437 residues: Glutamate-1-semialdehyde 2,1-aminomutase 1 (437 aa).

The residue at position 268 (lysine 268) is an N6-(pyridoxal phosphate)lysine.

Belongs to the class-III pyridoxal-phosphate-dependent aminotransferase family. HemL subfamily. As to quaternary structure, homodimer. The cofactor is pyridoxal 5'-phosphate.

It localises to the cytoplasm. It catalyses the reaction (S)-4-amino-5-oxopentanoate = 5-aminolevulinate. Its pathway is porphyrin-containing compound metabolism; protoporphyrin-IX biosynthesis; 5-aminolevulinate from L-glutamyl-tRNA(Glu): step 2/2. The protein is Glutamate-1-semialdehyde 2,1-aminomutase 1 of Halalkalibacterium halodurans (strain ATCC BAA-125 / DSM 18197 / FERM 7344 / JCM 9153 / C-125) (Bacillus halodurans).